We begin with the raw amino-acid sequence, 395 residues long: ATP phosphoribosyltransferase regulatory subunit (395 aa).

Belongs to the class-II aminoacyl-tRNA synthetase family. HisZ subfamily. Heteromultimer composed of HisG and HisZ subunits.

It localises to the cytoplasm. The protein operates within amino-acid biosynthesis; L-histidine biosynthesis; L-histidine from 5-phospho-alpha-D-ribose 1-diphosphate: step 1/9. In terms of biological role, required for the first step of histidine biosynthesis. May allow the feedback regulation of ATP phosphoribosyltransferase activity by histidine. This chain is ATP phosphoribosyltransferase regulatory subunit, found in Azotobacter vinelandii (strain DJ / ATCC BAA-1303).